We begin with the raw amino-acid sequence, 2148 residues long: General transcription factor 3C polypeptide 1 (2148 aa).

Over residues 473–487 (GEEAFLSDSESEEES) the composition is skewed to acidic residues. 2 disordered regions span residues 473–568 (GEEA…FDPH) and 587–609 (NPKEGGGSQKGGRHGSGQDKPHK). The span at 491 to 502 (GKRRGRGSRGHS) shows a compositional bias: basic residues. Lys533 participates in a covalent cross-link: Glycyl lysine isopeptide (Lys-Gly) (interchain with G-Cter in SUMO2). Position 666 is a phosphoserine (Ser666). Disordered regions lie at residues 717–771 (STAN…EKMG) and 818–863 (TGEQ…SSWE). Composition is skewed to basic and acidic residues over residues 759–770 (ESTRVKKTDEKM) and 825–835 (HSERKTGKQEP). Residues Lys769 and Lys832 each participate in a glycyl lysine isopeptide (Lys-Gly) (interchain with G-Cter in SUMO2) cross-link. Residue Ser1062 is modified to Phosphoserine. Positions 1186–1195 (EHFELDREPT) are enriched in basic and acidic residues. 5 disordered regions span residues 1186–1238 (EHFE…KKLR), 1597–1627 (KSLGKDGGLDDDDEEEDLDEGSGTKRQSVEV), 1823–1881 (KASG…LPAK), 1893–1928 (SPRPGTEEQTEAQAQFAAPEDAGAEGPRQESQESVG), and 2127–2148 (PRPSHSCYQSSAQPSTGVATSR). Thr1195 is modified (phosphothreonine). The segment covering 1198 to 1214 (RNRKVRGGKSQKRKRLK) has biased composition (basic residues). A compositionally biased stretch (basic and acidic residues) spans 1228-1238 (EHPEAKSKKLR). A compositionally biased stretch (acidic residues) spans 1605–1616 (LDDDDEEEDLDE). Phosphoserine is present on residues Ser1624, Ser1853, and Ser1893. Residues 1903-1912 (EAQAQFAAPE) are compositionally biased toward low complexity. Polar residues predominate over residues 2132 to 2148 (SCYQSSAQPSTGVATSR).

This sequence belongs to the TFIIIC subunit 1 family. As to quaternary structure, part of the TFIIIC subcomplex TFIIIC2, consisting of six subunits, GTF3C1, GTF3C2, GTF3C3, GTF3C4, GTF3C5 and GTF3C6. Interacts with IGHMBP2. Interacts with MAF1.

It localises to the nucleus. Required for RNA polymerase III-mediated transcription. Component of TFIIIC that initiates transcription complex assembly on tRNA and is required for transcription of 5S rRNA and other stable nuclear and cytoplasmic RNAs. Binds to the box B promoter element. This Rattus norvegicus (Rat) protein is General transcription factor 3C polypeptide 1 (Gtf3c1).